Here is a 379-residue protein sequence, read N- to C-terminus: 1-deoxy-D-xylulose 5-phosphate reductoisomerase (379 aa).

NADPH contacts are provided by Thr-10, Gly-11, Ser-12, Ile-13, Asn-39, and Asn-121. Lys-122 lines the 1-deoxy-D-xylulose 5-phosphate pocket. Glu-123 lines the NADPH pocket. Asp-147 contributes to the Mn(2+) binding site. Positions 148, 149, 173, and 196 each coordinate 1-deoxy-D-xylulose 5-phosphate. Position 149 (Glu-149) interacts with Mn(2+). Gly-202 is an NADPH binding site. 1-deoxy-D-xylulose 5-phosphate-binding residues include Ser-209, Asn-214, Lys-215, and Glu-218. Position 218 (Glu-218) interacts with Mn(2+).

The protein belongs to the DXR family. Mg(2+) is required as a cofactor. Mn(2+) serves as cofactor.

It catalyses the reaction 2-C-methyl-D-erythritol 4-phosphate + NADP(+) = 1-deoxy-D-xylulose 5-phosphate + NADPH + H(+). It participates in isoprenoid biosynthesis; isopentenyl diphosphate biosynthesis via DXP pathway; isopentenyl diphosphate from 1-deoxy-D-xylulose 5-phosphate: step 1/6. Catalyzes the NADPH-dependent rearrangement and reduction of 1-deoxy-D-xylulose-5-phosphate (DXP) to 2-C-methyl-D-erythritol 4-phosphate (MEP). This Chlamydia felis (strain Fe/C-56) (Chlamydophila felis) protein is 1-deoxy-D-xylulose 5-phosphate reductoisomerase.